A 427-amino-acid chain; its full sequence is Glutamate-1-semialdehyde 2,1-aminomutase 2 (427 aa).

Lys267 is modified (N6-(pyridoxal phosphate)lysine).

It belongs to the class-III pyridoxal-phosphate-dependent aminotransferase family. HemL subfamily. Homodimer. Requires pyridoxal 5'-phosphate as cofactor.

The protein resides in the cytoplasm. The catalysed reaction is (S)-4-amino-5-oxopentanoate = 5-aminolevulinate. It participates in porphyrin-containing compound metabolism; protoporphyrin-IX biosynthesis; 5-aminolevulinate from L-glutamyl-tRNA(Glu): step 2/2. In Staphylococcus haemolyticus (strain JCSC1435), this protein is Glutamate-1-semialdehyde 2,1-aminomutase 2.